The sequence spans 113 residues: Nucleoid-associated protein SYNW0027 (113 aa).

This sequence belongs to the YbaB/EbfC family. Homodimer.

The protein resides in the cytoplasm. It localises to the nucleoid. Binds to DNA and alters its conformation. May be involved in regulation of gene expression, nucleoid organization and DNA protection. This chain is Nucleoid-associated protein SYNW0027, found in Parasynechococcus marenigrum (strain WH8102).